The chain runs to 1347 residues: Spermatogenesis-associated protein 31A5 (1347 aa).

Residues proline 23–leucine 43 traverse the membrane as a helical segment. Disordered regions lie at residues proline 55–cysteine 87, glycine 106–threonine 233, glutamate 373–lysine 397, aspartate 628–glutamine 657, arginine 900–valine 955, valine 1084–serine 1161, and lysine 1313–histidine 1335. Basic residues predominate over residues glycine 60 to arginine 82. Residues leucine 165–valine 178 are compositionally biased toward polar residues. Residues proline 198–proline 211 show a composition bias toward pro residues. 2 stretches are compositionally biased toward polar residues: residues proline 631–glutamate 651 and leucine 927–alanine 948. Basic and acidic residues-rich tracts occupy residues histidine 1108–glycine 1127 and arginine 1137–glutamate 1146.

Belongs to the SPATA31 family.

Its subcellular location is the membrane. May play a role in spermatogenesis. The sequence is that of Spermatogenesis-associated protein 31A5 (SPATA31A5) from Homo sapiens (Human).